Here is a 142-residue protein sequence, read N- to C-terminus: UPF0102 protein PsycPRwf_0497 (142 aa).

Belongs to the UPF0102 family.

This chain is UPF0102 protein PsycPRwf_0497, found in Psychrobacter sp. (strain PRwf-1).